The chain runs to 495 residues: UDP-N-acetylmuramoyl-L-alanyl-D-glutamate--2,6-diaminopimelate ligase (495 aa).

Residues Leu-27, Ser-29, and 44-46 (HQA) each bind UDP-N-acetyl-alpha-D-muramoyl-L-alanyl-D-glutamate. An ATP-binding site is contributed by 116-122 (GTNGKTT). UDP-N-acetyl-alpha-D-muramoyl-L-alanyl-D-glutamate contacts are provided by residues Asn-157, 158–159 (TT), Ser-185, Gln-191, and Arg-193. Lys-225 is subject to N6-carboxylysine. Meso-2,6-diaminopimelate contacts are provided by residues Arg-390, 414 to 417 (DNPR), Gly-465, and Glu-469. A Meso-diaminopimelate recognition motif motif is present at residues 414-417 (DNPR).

It belongs to the MurCDEF family. MurE subfamily. Requires Mg(2+) as cofactor. Post-translationally, carboxylation is probably crucial for Mg(2+) binding and, consequently, for the gamma-phosphate positioning of ATP.

The protein resides in the cytoplasm. The enzyme catalyses UDP-N-acetyl-alpha-D-muramoyl-L-alanyl-D-glutamate + meso-2,6-diaminopimelate + ATP = UDP-N-acetyl-alpha-D-muramoyl-L-alanyl-gamma-D-glutamyl-meso-2,6-diaminopimelate + ADP + phosphate + H(+). It participates in cell wall biogenesis; peptidoglycan biosynthesis. Catalyzes the addition of meso-diaminopimelic acid to the nucleotide precursor UDP-N-acetylmuramoyl-L-alanyl-D-glutamate (UMAG) in the biosynthesis of bacterial cell-wall peptidoglycan. This chain is UDP-N-acetylmuramoyl-L-alanyl-D-glutamate--2,6-diaminopimelate ligase, found in Shigella flexneri.